A 101-amino-acid chain; its full sequence is Small ribosomal subunit protein uS14 (101 aa).

The protein belongs to the universal ribosomal protein uS14 family. Part of the 30S ribosomal subunit. Contacts proteins S3 and S10.

Functionally, binds 16S rRNA, required for the assembly of 30S particles and may also be responsible for determining the conformation of the 16S rRNA at the A site. The sequence is that of Small ribosomal subunit protein uS14 from Chlamydia abortus (strain DSM 27085 / S26/3) (Chlamydophila abortus).